The primary structure comprises 277 residues: Large ribosomal subunit protein uL2 (277 aa).

Disordered regions lie at residues 37-60 (KNST…GHKH) and 223-265 (VVMN…KRTD). Polar residues predominate over residues 39–49 (STAGRNSNGHI). Basic residues predominate over residues 50–60 (TTRHKGGGHKH). Residues 229-244 (DHPHGGGEGRTGEARE) are compositionally biased toward basic and acidic residues.

The protein belongs to the universal ribosomal protein uL2 family. As to quaternary structure, part of the 50S ribosomal subunit. Forms a bridge to the 30S subunit in the 70S ribosome.

In terms of biological role, one of the primary rRNA binding proteins. Required for association of the 30S and 50S subunits to form the 70S ribosome, for tRNA binding and peptide bond formation. It has been suggested to have peptidyltransferase activity; this is somewhat controversial. Makes several contacts with the 16S rRNA in the 70S ribosome. The protein is Large ribosomal subunit protein uL2 of Neisseria meningitidis serogroup C (strain 053442).